The following is a 271-amino-acid chain: Tryptophan synthase alpha chain (271 aa).

Catalysis depends on proton acceptor residues Glu49 and Asp60.

It belongs to the TrpA family. As to quaternary structure, tetramer of two alpha and two beta chains.

The enzyme catalyses (1S,2R)-1-C-(indol-3-yl)glycerol 3-phosphate + L-serine = D-glyceraldehyde 3-phosphate + L-tryptophan + H2O. Its pathway is amino-acid biosynthesis; L-tryptophan biosynthesis; L-tryptophan from chorismate: step 5/5. Its function is as follows. The alpha subunit is responsible for the aldol cleavage of indoleglycerol phosphate to indole and glyceraldehyde 3-phosphate. The sequence is that of Tryptophan synthase alpha chain from Burkholderia ambifaria (strain MC40-6).